Reading from the N-terminus, the 193-residue chain is Ion-translocating oxidoreductase complex subunit A (193 aa).

The next 6 helical transmembrane spans lie at 5-25 (LLLFVGTVLVNNFVLVKFLGL), 39-59 (IGMGLATTFVLTLASVCAWMV), 62-82 (FILLPLGLIYLRTLAFILVIA), 102-122 (LLGIFLPLITTNCAVLGVALL), 134-154 (AVYGFSAAAGFSLVMVLFAAI), and 171-191 (SIALITAGLMSLAFMGFTGLV).

It belongs to the NqrDE/RnfAE family. As to quaternary structure, the complex is composed of six subunits: RnfA, RnfB, RnfC, RnfD, RnfE and RnfG.

It localises to the cell inner membrane. Functionally, part of a membrane-bound complex that couples electron transfer with translocation of ions across the membrane. The polypeptide is Ion-translocating oxidoreductase complex subunit A (Yersinia pestis (strain Pestoides F)).